Reading from the N-terminus, the 396-residue chain is Mannonate dehydratase (396 aa).

It belongs to the mannonate dehydratase family. Requires Fe(2+) as cofactor. Mn(2+) is required as a cofactor.

The enzyme catalyses D-mannonate = 2-dehydro-3-deoxy-D-gluconate + H2O. The protein operates within carbohydrate metabolism; pentose and glucuronate interconversion. Catalyzes the dehydration of D-mannonate. This Yersinia enterocolitica serotype O:8 / biotype 1B (strain NCTC 13174 / 8081) protein is Mannonate dehydratase.